The primary structure comprises 217 residues: Adenylate kinase (217 aa).

Gly-10–Thr-15 lines the ATP pocket. Residues Ser-30–Val-59 are NMP. AMP-binding positions include Thr-31, Arg-36, Ala-57–Val-59, Gly-85–Arg-88, and Gln-92. The interval Gly-126–Asp-163 is LID. Position 127 (Arg-127) interacts with ATP. Zn(2+) is bound by residues Cys-130 and Cys-133. Ser-136–Tyr-137 serves as a coordination point for ATP. 2 residues coordinate Zn(2+): Cys-150 and Asp-153. AMP-binding residues include Arg-160 and Arg-171. Gln-199 provides a ligand contact to ATP.

Belongs to the adenylate kinase family. Monomer.

The protein resides in the cytoplasm. It catalyses the reaction AMP + ATP = 2 ADP. Its pathway is purine metabolism; AMP biosynthesis via salvage pathway; AMP from ADP: step 1/1. In terms of biological role, catalyzes the reversible transfer of the terminal phosphate group between ATP and AMP. Plays an important role in cellular energy homeostasis and in adenine nucleotide metabolism. The protein is Adenylate kinase of Lysinibacillus sphaericus (strain C3-41).